Here is a 180-residue protein sequence, read N- to C-terminus: Adenine phosphoribosyltransferase (180 aa).

Serine 2 bears the N-acetylserine mark. 3 positions are modified to phosphoserine: serine 4, serine 15, and serine 30. Residue tyrosine 60 is modified to Phosphotyrosine. The residue at position 66 (serine 66) is a Phosphoserine. The residue at position 114 (lysine 114) is an N6-acetyllysine. Threonine 135 is modified (phosphothreonine).

This sequence belongs to the purine/pyrimidine phosphoribosyltransferase family. In terms of assembly, homodimer.

The protein resides in the cytoplasm. It carries out the reaction AMP + diphosphate = 5-phospho-alpha-D-ribose 1-diphosphate + adenine. It participates in purine metabolism; AMP biosynthesis via salvage pathway; AMP from adenine: step 1/1. Catalyzes a salvage reaction resulting in the formation of AMP, that is energically less costly than de novo synthesis. This is Adenine phosphoribosyltransferase from Rattus norvegicus (Rat).